We begin with the raw amino-acid sequence, 473 residues long: Levansucrase (473 aa).

An N-terminal signal peptide occupies residues 1–29 (MNIKKFAKQATVLTFTTALLAGGATQAFA). Residues W85, D86, and S164 each contribute to the sucrose site. Catalysis depends on D86, which acts as the Nucleophile. Position 241 (D241) interacts with Ca(2+). R246 and D247 together coordinate sucrose. Q272, L308, N310, and D339 together coordinate Ca(2+). E340 is a binding site for sucrose. The active-site Proton donor/acceptor is the E342. R360 is a binding site for sucrose.

It belongs to the glycosyl hydrolase 68 family. Monomer.

The protein resides in the secreted. The enzyme catalyses [6)-beta-D-fructofuranosyl-(2-&gt;](n) alpha-D-glucopyranoside + sucrose = [6)-beta-D-fructofuranosyl-(2-&gt;](n+1) alpha-D-glucopyranoside + D-glucose. Ca(2+) may play an important structural role and promote stability of levansucrase. The enzyme concentration is a factor defining the molecular weight (MW) levan distribution. A bimodal distribution is reported at the usual enzyme concentrations. At low concentrations, the enzyme synthesizes high MW levan, and at high concentrations, it synthesizes low MW levan. Its function is as follows. Catalyzes the synthesis of levan, a fructose polymer, by transferring the fructosyl moiety from sucrose to a growing acceptor molecule. Also displays sucrose hydrolase activity. At low sucrose concentrations, functions as an hydrolase with water as acceptor, whereas at higher substrate concentrations it adds fructosyl units to a growing levan chain. This is Levansucrase from Bacillus subtilis (strain 168).